The primary structure comprises 198 residues: Probable GTP-binding protein EngB (198 aa).

Residues 21–195 (NFSEVAFLGR…EDIIINQTLG (175 aa)) enclose the EngB-type G domain. Residues 29–36 (GRSNVGKS), 56–60 (GKTQL), 81–84 (DLPG), 151–154 (TKCD), and 174–176 (VSN) each bind GTP. Mg(2+) contacts are provided by Ser36 and Thr58.

It belongs to the TRAFAC class TrmE-Era-EngA-EngB-Septin-like GTPase superfamily. EngB GTPase family. It depends on Mg(2+) as a cofactor.

Functionally, necessary for normal cell division and for the maintenance of normal septation. The polypeptide is Probable GTP-binding protein EngB (Campylobacter jejuni subsp. jejuni serotype O:23/36 (strain 81-176)).